The chain runs to 523 residues: Peptide chain release factor 3 (523 aa).

A tr-type G domain is found at 10-277 (NKRRTFAIIS…QFVDLAPAPG (268 aa)). GTP contacts are provided by residues 19 to 26 (SHPDAGKT), 87 to 91 (DTPGH), and 141 to 144 (NKLD).

The protein belongs to the TRAFAC class translation factor GTPase superfamily. Classic translation factor GTPase family. PrfC subfamily.

The protein resides in the cytoplasm. Functionally, increases the formation of ribosomal termination complexes and stimulates activities of RF-1 and RF-2. It binds guanine nucleotides and has strong preference for UGA stop codons. It may interact directly with the ribosome. The stimulation of RF-1 and RF-2 is significantly reduced by GTP and GDP, but not by GMP. The sequence is that of Peptide chain release factor 3 from Lactobacillus delbrueckii subsp. bulgaricus (strain ATCC BAA-365 / Lb-18).